The following is a 171-amino-acid chain: Ribosome maturation factor RimM (171 aa).

Positions 97-170 constitute a PRC barrel domain; sequence KLNYFSWDHY…IIYMKLPVGL (74 aa).

This sequence belongs to the RimM family. As to quaternary structure, binds ribosomal protein uS19.

It is found in the cytoplasm. Functionally, an accessory protein needed during the final step in the assembly of 30S ribosomal subunit, possibly for assembly of the head region. Essential for efficient processing of 16S rRNA. May be needed both before and after RbfA during the maturation of 16S rRNA. It has affinity for free ribosomal 30S subunits but not for 70S ribosomes. The sequence is that of Ribosome maturation factor RimM from Azobacteroides pseudotrichonymphae genomovar. CFP2.